A 905-amino-acid chain; its full sequence is V-type proton ATPase 116 kDa subunit a 1 (905 aa).

Over 1–424 (MGDYVTPGEE…DAYGIATYRE (424 aa)) the chain is Cytoplasmic. A helical membrane pass occupies residues 425–443 (INPAPYTMISFPFLFAVMF). Residues 444 to 445 (GD) lie on the Lumenal side of the membrane. Residues 446–462 (MGHGAIMLLAALFFILK) form a helical membrane-spanning segment. The Cytoplasmic segment spans residues 463–477 (EKQLEAARIKDEIFQ). Residues 478–507 (TFFGGRYVIFLMGAFSIYTGFMYNDVFSKS) traverse the membrane as a helical segment. Over 508 to 572 (INTFGSSWQN…EGNKLSFLNS (65 aa)) the chain is Lumenal. The chain crosses the membrane as a helical span at residues 573 to 592 (MKMKMSVLFGIAQMTFGVLL). The Cytoplasmic portion of the chain corresponds to 593–610 (SYQNFIYFKSDLDIKYMF). A helical membrane pass occupies residues 611–631 (IPQMIFLSSIFIYLCIQILSK). Topologically, residues 632 to 699 (WLFFGAVGGT…YPGQATIEII (68 aa)) are lumenal. A helical transmembrane segment spans residues 700-719 (LVVLALVQVPIMLFAKPYFL). The Cytoplasmic portion of the chain corresponds to 720 to 788 (YRRDKQQSRY…DVMVYQAIHT (69 aa)). A helical membrane pass occupies residues 789 to 813 (IEFVLGCVSHTASYLRLWALSLAHA). At 814 to 834 (QLSDVLWTMVFRNAFVLDGYT) the chain is on the lumenal side. Residues 835 to 873 (GAIATYILFFIFGSLSVFILVLMEGLSAFLHALRLHWVE) traverse the membrane as a helical segment. Residues 874-905 (FQSKFYGGLGYEFAPFSFEKILAEEREAEENL) lie on the Cytoplasmic side of the membrane.

The protein belongs to the V-ATPase 116 kDa subunit family. V-ATPase is a heteromultimeric enzyme made up of two complexes: the ATP-hydrolytic V1 complex and the proton translocation V0 complex. The V1 complex consists of three catalytic AB heterodimers that form a heterohexamer, three peripheral stalks each consisting of EG heterodimers, one central rotor including subunits D and F, and the regulatory subunits C and H. The proton translocation complex V0 consists of the proton transport subunit a, a ring of proteolipid subunits c9c'', rotary subunit d, subunits e and f, and the accessory subunits vah-19/Ac45 and vah-20/PRR. Interacts with V-type proton ATPase subunit C vha-11. In terms of tissue distribution, ubiquitous expression in embryos. Expressed in gonads, intestine, neurons in the head and motoneurons in the ventral cord of larvae and adults. Expressed in the vulvae and spermathecal uterine valves. Weakly expressed in the pharynx. As to expression, specifically expressed in the nervous system.

Its subcellular location is the membrane. Functionally, subunit of the V0 complex of vacuolar(H+)-ATPase (V-ATPase), a multisubunit enzyme composed of a peripheral complex (V1) that hydrolyzes ATP and a membrane integral complex (V0) that translocates protons. V-ATPase is responsible for acidifying and maintaining the pH of intracellular compartments and in some cell types, is targeted to the plasma membrane, where it is responsible for acidifying the extracellular environment. Required for assembly and activity of the vacuolar ATPase. Regulates the size of gut granules during embryonic development. In neurons, required for necrotic cell death by promoting intracellular acidification. Required for cell death induced by hypoxia. Required for acidification of synaptic vesicles and the release of neurotransmitters from adult neurons. In Caenorhabditis elegans, this protein is V-type proton ATPase 116 kDa subunit a 1.